Consider the following 480-residue polypeptide: Adenosylhomocysteinase (480 aa).

Positions 63, 142, and 203 each coordinate substrate. Position 204-206 (204-206 (TTT)) interacts with NAD(+). Positions 233 and 237 each coordinate substrate. Residues Asn-238, 267–272 (GYGDVG), Glu-290, Asn-325, 346–348 (IGH), and Asn-394 contribute to the NAD(+) site.

Belongs to the adenosylhomocysteinase family. It depends on NAD(+) as a cofactor.

Its subcellular location is the cytoplasm. It catalyses the reaction S-adenosyl-L-homocysteine + H2O = L-homocysteine + adenosine. It functions in the pathway amino-acid biosynthesis; L-homocysteine biosynthesis; L-homocysteine from S-adenosyl-L-homocysteine: step 1/1. Its function is as follows. May play a key role in the regulation of the intracellular concentration of adenosylhomocysteine. This is Adenosylhomocysteinase from Xylella fastidiosa (strain M12).